Consider the following 298-residue polypeptide: Leucine-rich repeat-containing protein 55 (298 aa).

Residues 1 to 34 (MGDTWAQLPWPGPPHSALLLVFFLLAAGVMHSDA) form the signal peptide. Residues 35-65 (GTSCPVLCTCRNQVVDCSNQRLFSVPPDLPM) enclose the LRRNT domain. 2 disulfides stabilise this stretch: C38-C44 and C42-C51. LRR repeat units follow at residues 66-87 (DTRN…YLTC), 90-111 (ELRV…LFLH), 114-135 (RLAH…MFRE), 138-160 (GLVH…AFQG), and 163-186 (HLRD…EGLP). Residues 196–251 (NPWVCGCTMEPLLKWLRNRIQRCTADSQLAECRGPPEVEGAPLFSLTEESFKACHL) enclose the LRRCT domain. Disulfide bonds link C200–C227 and C202–C249. The helical transmembrane segment at 259–279 (LFIAFVGFVVSIASVATNFLL) threads the bilayer.

In terms of assembly, interacts with KCNMA1.

It is found in the cell membrane. Auxiliary protein of the large-conductance, voltage and calcium-activated potassium channel (BK alpha). Modulates gating properties by producing a marked shift in the BK channel's voltage dependence of activation in the hyperpolarizing direction, and in the absence of calcium. The protein is Leucine-rich repeat-containing protein 55 (Lrrc55) of Mus musculus (Mouse).